An 86-amino-acid chain; its full sequence is Small ribosomal subunit protein bS20 (86 aa).

A compositionally biased stretch (basic and acidic residues) spans 1–18 (MANIKSQEKRIRTNERAR). The segment at 1–25 (MANIKSQEKRIRTNERARLRNQATK) is disordered.

It belongs to the bacterial ribosomal protein bS20 family.

Its function is as follows. Binds directly to 16S ribosomal RNA. This is Small ribosomal subunit protein bS20 from Mycobacteroides abscessus (strain ATCC 19977 / DSM 44196 / CCUG 20993 / CIP 104536 / JCM 13569 / NCTC 13031 / TMC 1543 / L948) (Mycobacterium abscessus).